Here is a 438-residue protein sequence, read N- to C-terminus: V-type ATP synthase beta chain (438 aa).

Belongs to the ATPase alpha/beta chains family.

Its function is as follows. Produces ATP from ADP in the presence of a proton gradient across the membrane. The V-type beta chain is a regulatory subunit. The chain is V-type ATP synthase beta chain from Chlamydia trachomatis serovar A (strain ATCC VR-571B / DSM 19440 / HAR-13).